The following is a 146-amino-acid chain: Large ribosomal subunit protein mL49 (146 aa).

Residues 1-38 (MISSCVTRCFGRGKCLPGPATASIYQTIRCISTNSNKA) constitute a mitochondrion transit peptide.

This sequence belongs to the mitochondrion-specific ribosomal protein mL49 family. Component of the mitochondrial large ribosomal subunit (mt-LSU). Mature yeast 74S mitochondrial ribosomes consist of a small (37S) and a large (54S) subunit. The 37S small subunit contains a 15S ribosomal RNA (15S mt-rRNA) and 34 different proteins. The 54S large subunit contains a 21S rRNA (21S mt-rRNA) and 46 different proteins.

The protein resides in the mitochondrion. In terms of biological role, component of the mitochondrial ribosome (mitoribosome), a dedicated translation machinery responsible for the synthesis of mitochondrial genome-encoded proteins, including at least some of the essential transmembrane subunits of the mitochondrial respiratory chain. The mitoribosomes are attached to the mitochondrial inner membrane and translation products are cotranslationally integrated into the membrane. This chain is Large ribosomal subunit protein mL49 (IMG2), found in Saccharomyces cerevisiae (strain ATCC 204508 / S288c) (Baker's yeast).